The following is a 680-amino-acid chain: WD repeat-containing protein 48 homolog (680 aa).

8 WD repeats span residues 26-65 (QHRNGVNALQLDANNGKLYSAGRDAIIRVWNTRTDSSEKY), 71-110 (HHNDWVNDIVLCCNGRNLISASCDTTVKVWNAQKGFCMST), 113-152 (THRDYVQALAYAKDREQVASAGLDKAIFLWDVNTLTALTA), 164-203 (GSKDSIYSLAMNPSGTVIVSGSTENILRIWDPRTCMRSMK), 206-245 (GHTENVRCLVVSPDGNQVVSGSSDGTIKVWNLGQQRCVQT), 248-287 (VHKEGVWSLLMSENFQYIVSGSRDRNIIVTEMRNPSNKTL), 290-329 (EEQAPVLSLGYNIDKTGVWATTWNSDIRCWKLPMYDRCTM), and 350-389 (KGGAAIKECAVLNDKRYIITKDSQDQVVVYDVLRVVKKEQ). A disordered region spans residues 592-616 (ETTPSGGNANNSLQNSQSDANSEGS).

The protein belongs to the WD repeat WDR48 family. In terms of assembly, catalytic component of the Usp12-46 deubiquitylase complex consisting of Usp12-46, Wdr20 and Uaf1; regulatory subunit that, together wtih Wdr20, stabilizes Usp12-46. The Usp12-46 deubiquitylase complex associates with arr/arrow; the interaction leads to deubiquitination and stabilization of arr/arrow.

Regulatory component of the Usp12-46 deubiquitylase complex. activates deubiquitination by increasing the catalytic turnover without increasing the affinity of deubiquitinating enzymes for the substrate. The complex deubiquitylates the wg/wingless-signaling receptor arr/arrow, which stabilizes the receptor and increases its concentration at the cell surface; this enhances the sensitivity of cells to wg/wingless-signal stimulation. This increases the amplitude and spatial range of the signaling response to the wg/wingless morphogen gradient, facilitating the precise concentration-dependent regulation of its target genes. Together with Wdr20 and Usp12-46 required for wg/wingless-mediated signaling in the wing imaginal disc and for wg/wingless-dependent regulation of intestinal stem cell proliferation. This chain is WD repeat-containing protein 48 homolog, found in Drosophila yakuba (Fruit fly).